The chain runs to 500 residues: Glycerol kinase (500 aa).

Thr-16 lines the ADP pocket. Residues Thr-16 and Thr-17 each contribute to the ATP site. Position 16 (Thr-16) interacts with sn-glycerol 3-phosphate. Position 20 (Arg-20) interacts with ADP. Sn-glycerol 3-phosphate contacts are provided by Arg-86, Glu-87, Tyr-138, and Asp-243. Positions 86, 87, 138, 243, and 244 each coordinate glycerol. Residues Thr-265 and Gly-313 each coordinate ADP. Positions 265, 313, 317, and 414 each coordinate ATP. Residues Gly-414 and Asn-418 each contribute to the ADP site.

It belongs to the FGGY kinase family.

It catalyses the reaction glycerol + ATP = sn-glycerol 3-phosphate + ADP + H(+). The protein operates within polyol metabolism; glycerol degradation via glycerol kinase pathway; sn-glycerol 3-phosphate from glycerol: step 1/1. With respect to regulation, inhibited by fructose 1,6-bisphosphate (FBP). Functionally, key enzyme in the regulation of glycerol uptake and metabolism. Catalyzes the phosphorylation of glycerol to yield sn-glycerol 3-phosphate. The sequence is that of Glycerol kinase from Trichormus variabilis (strain ATCC 29413 / PCC 7937) (Anabaena variabilis).